Here is a 475-residue protein sequence, read N- to C-terminus: Bifunctional protein HldE (475 aa).

Residues M1 to A317 form a ribokinase region. ATP is bound at residue N194–E197. D263 is an active-site residue. The segment at M343–E475 is cytidylyltransferase.

This sequence in the N-terminal section; belongs to the carbohydrate kinase PfkB family. It in the C-terminal section; belongs to the cytidylyltransferase family. Homodimer.

It carries out the reaction D-glycero-beta-D-manno-heptose 7-phosphate + ATP = D-glycero-beta-D-manno-heptose 1,7-bisphosphate + ADP + H(+). The catalysed reaction is D-glycero-beta-D-manno-heptose 1-phosphate + ATP + H(+) = ADP-D-glycero-beta-D-manno-heptose + diphosphate. Its pathway is nucleotide-sugar biosynthesis; ADP-L-glycero-beta-D-manno-heptose biosynthesis; ADP-L-glycero-beta-D-manno-heptose from D-glycero-beta-D-manno-heptose 7-phosphate: step 1/4. The protein operates within nucleotide-sugar biosynthesis; ADP-L-glycero-beta-D-manno-heptose biosynthesis; ADP-L-glycero-beta-D-manno-heptose from D-glycero-beta-D-manno-heptose 7-phosphate: step 3/4. Catalyzes the phosphorylation of D-glycero-D-manno-heptose 7-phosphate at the C-1 position to selectively form D-glycero-beta-D-manno-heptose-1,7-bisphosphate. Its function is as follows. Catalyzes the ADP transfer from ATP to D-glycero-beta-D-manno-heptose 1-phosphate, yielding ADP-D-glycero-beta-D-manno-heptose. This Histophilus somni (strain 129Pt) (Haemophilus somnus) protein is Bifunctional protein HldE.